The sequence spans 932 residues: Isoleucine--tRNA ligase (932 aa).

The 'HIGH' region motif lies at 57 to 67 (PYANGNIHLGH). Glu-552 contacts L-isoleucyl-5'-AMP. The 'KMSKS' region signature appears at 593-597 (KMSKS). Residue Lys-596 participates in ATP binding. 4 residues coordinate Zn(2+): Cys-889, Cys-892, Cys-911, and Cys-914.

The protein belongs to the class-I aminoacyl-tRNA synthetase family. IleS type 1 subfamily. As to quaternary structure, monomer. Zn(2+) serves as cofactor.

The protein resides in the cytoplasm. The enzyme catalyses tRNA(Ile) + L-isoleucine + ATP = L-isoleucyl-tRNA(Ile) + AMP + diphosphate. Catalyzes the attachment of isoleucine to tRNA(Ile). As IleRS can inadvertently accommodate and process structurally similar amino acids such as valine, to avoid such errors it has two additional distinct tRNA(Ile)-dependent editing activities. One activity is designated as 'pretransfer' editing and involves the hydrolysis of activated Val-AMP. The other activity is designated 'posttransfer' editing and involves deacylation of mischarged Val-tRNA(Ile). The polypeptide is Isoleucine--tRNA ligase (Lactococcus lactis subsp. lactis (strain IL1403) (Streptococcus lactis)).